The following is an 878-amino-acid chain: Phosphoenolpyruvate carboxylase (878 aa).

Active-site residues include histidine 137 and lysine 545.

This sequence belongs to the PEPCase type 1 family. It depends on Mg(2+) as a cofactor.

It catalyses the reaction oxaloacetate + phosphate = phosphoenolpyruvate + hydrogencarbonate. Its function is as follows. Forms oxaloacetate, a four-carbon dicarboxylic acid source for the tricarboxylic acid cycle. This Serratia proteamaculans (strain 568) protein is Phosphoenolpyruvate carboxylase.